Here is a 76-residue protein sequence, read N- to C-terminus: Bowman-Birk type proteinase inhibitor DE-3 (76 aa).

7 disulfide bridges follow: Cys-16–Cys-70, Cys-17–Cys-32, Cys-20–Cys-66, Cys-22–Cys-30, Cys-40–Cys-47, Cys-44–Cys-59, and Cys-49–Cys-57.

Belongs to the Bowman-Birk serine protease inhibitor family.

The polypeptide is Bowman-Birk type proteinase inhibitor DE-3 (Macrotyloma axillare (Perennial horse gram)).